A 226-amino-acid polypeptide reads, in one-letter code: Glutathione S-transferase kappa 1 (226 aa).

Residue 16–18 (SPY) coordinates glutathione. Lys-49 is subject to N6-succinyllysine. Asn-53 lines the glutathione pocket. Residues Lys-71 and Lys-85 each carry the N6-acetyllysine modification. At Lys-116 the chain carries N6-acetyllysine; alternate. Lys-116 is subject to N6-succinyllysine; alternate. N6-succinyllysine is present on Lys-144. The residue at position 158 (Lys-158) is an N6-acetyllysine; alternate. Lys-158 carries the N6-succinyllysine; alternate modification. N6-acetyllysine occurs at positions 165 and 169. Glutathione-binding positions include Leu-183 and 200 to 201 (SD).

This sequence belongs to the GST superfamily. Kappa family. Homodimer. In terms of tissue distribution, ubiquitous.

It is found in the peroxisome. The catalysed reaction is RX + glutathione = an S-substituted glutathione + a halide anion + H(+). In terms of biological role, glutathione S-transferase that catalyzes the conjugation of glutathione to exogenous and endogenous compounds. Significant glutathione conjugating activity is found only with the model substrate, 1-chloro-2,4-dinitrobenzene (CDNB). The chain is Glutathione S-transferase kappa 1 (GSTK1) from Homo sapiens (Human).